The primary structure comprises 927 residues: Non-lysosomal glucosylceramidase (927 aa).

The segment at 32-62 (EETGGTKDVQVTDCKSPEDSRPPKETDCCNP) is disordered. Over residues 46–58 (KSPEDSRPPKETD) the composition is skewed to basic and acidic residues.

This sequence belongs to the non-lysosomal glucosylceramidase family. Widely expressed. Mainly expressed in brain, heart, skeletal muscle, kidney and placenta and expressed at lower levels in liver, spleen, small intestine and lung. Detectable in colon, thymus and peripheral blood leukocytes.

The protein localises to the endoplasmic reticulum membrane. It is found in the golgi apparatus membrane. It carries out the reaction a beta-D-glucosyl-(1&lt;-&gt;1')-N-acylsphing-4-enine + H2O = an N-acylsphing-4-enine + D-glucose. The enzyme catalyses a beta-D-galactosyl-(1&lt;-&gt;1')-N-acylsphing-4-enine + H2O = an N-acylsphing-4-enine + D-galactose. It catalyses the reaction beta-D-glucosyl-(1-&gt;3)-O-lithocholate + H2O = lithocholate + D-glucose. The catalysed reaction is beta-D-glucosyl-(1-&gt;3)-O-chenodeoxycholate + H2O = chenodeoxycholate + D-glucose. It carries out the reaction a di-trans,poly-cis-dolichyl beta-D-glucosyl phosphate + chenodeoxycholate = beta-D-glucosyl-(1-&gt;3)-O-chenodeoxycholate + a di-trans,poly-cis-dolichyl phosphate + H(+). The enzyme catalyses octyl beta-D-glucose + chenodeoxycholate = beta-D-glucosyl-(1-&gt;3)-O-chenodeoxycholate + octan-1-ol. It catalyses the reaction cholesteryl 3-beta-D-glucoside + H2O = cholesterol + D-glucose. The catalysed reaction is a beta-D-glucosyl-(1&lt;-&gt;1')-N-acylsphing-4-enine + cholesterol = cholesteryl 3-beta-D-glucoside + an N-acylsphing-4-enine. It carries out the reaction beta-D-glucosyl-N-(9Z-octadecenoyl)-sphing-4E-enine + cholesterol = N-(9Z-octadecenoyl)-sphing-4-enine + cholesteryl 3-beta-D-glucoside. The enzyme catalyses a beta-D-galactosyl-(1&lt;-&gt;1')-N-acylsphing-4-enine + cholesterol = cholesteryl 3-beta-D-galactoside + an N-acylsphing-4-enine. It catalyses the reaction 1-(beta-D-galactosyl)-N-dodecanoylsphing-4-enine + cholesterol = cholesteryl 3-beta-D-galactoside + N-dodecanoylsphing-4-enine. Its pathway is lipid metabolism; sphingolipid metabolism. It functions in the pathway steroid metabolism; cholesterol metabolism. With respect to regulation, inhibited by AMP-DMN/N -((5-adamantane-1-yl-methoxy)pentyl)-deoxynojirimycin. Activated by Mn(2+), Co(2+) and Mg(2+) and inhibited by Zn(2+). Enzymatic activity is dependent on membrane association and requires the presence of lipids. The membrane-associated enzyme is not inhibited by condutiriol B epoxide and bromocondutiriol B epoxide. Its function is as follows. Non-lysosomal glucosylceramidase that catalyzes the hydrolysis of glucosylceramides/GlcCers (such as beta-D-glucosyl-(1&lt;-&gt;1')-N-acylsphing-4-enine) to free glucose and ceramides (such as N-acylsphing-4-enine). GlcCers are membrane glycosphingolipids that have a wide intracellular distribution. They are the main precursors of more complex glycosphingolipids that play a role in cellular growth, differentiation, adhesion, signaling, cytoskeletal dynamics and membrane properties. Involved in the transglucosylation of cholesterol, transfers glucose from GlcCer to cholesterol, thereby modifying its water solubility and biological properties. Under specific conditions, may catalyze the reverse reaction, transferring glucose from cholesteryl-3-beta-D-glucoside to ceramide (such as N-acylsphing-4-enine). May play a role in the metabolism of bile acids. Able to hydrolyze bile acid 3-O-glucosides as well as to produce bile acid-glucose conjugates thanks to a bile acid glucosyl transferase activity. Catalyzes the hydrolysis of galactosylceramides/GalCers (such as beta-D-galactosyl-(1&lt;-&gt;1')-N-acylsphing-4-enine), as well as the galactosyl transfer between GalCers and cholesterol in vitro with lower activity compared with their activity against GlcCers. The sequence is that of Non-lysosomal glucosylceramidase from Homo sapiens (Human).